We begin with the raw amino-acid sequence, 201 residues long: ATP-dependent Clp protease proteolytic subunit (201 aa).

Ser101 serves as the catalytic Nucleophile. His126 is a catalytic residue.

The protein belongs to the peptidase S14 family. In terms of assembly, component of the chloroplastic Clp protease core complex.

The protein resides in the plastid. The protein localises to the chloroplast stroma. It carries out the reaction Hydrolysis of proteins to small peptides in the presence of ATP and magnesium. alpha-casein is the usual test substrate. In the absence of ATP, only oligopeptides shorter than five residues are hydrolyzed (such as succinyl-Leu-Tyr-|-NHMec, and Leu-Tyr-Leu-|-Tyr-Trp, in which cleavage of the -Tyr-|-Leu- and -Tyr-|-Trp bonds also occurs).. Cleaves peptides in various proteins in a process that requires ATP hydrolysis. Has a chymotrypsin-like activity. Plays a major role in the degradation of misfolded proteins. This Chaetosphaeridium globosum (Charophycean green alga) protein is ATP-dependent Clp protease proteolytic subunit.